Consider the following 262-residue polypeptide: Orotidine 5'-phosphate decarboxylase (262 aa).

Residues Asp-35, 57 to 59 (KTH), 89 to 98 (DRKFADIGNT), Tyr-215, and Arg-233 contribute to the substrate site. Residue Lys-91 is the Proton donor of the active site.

Belongs to the OMP decarboxylase family.

It carries out the reaction orotidine 5'-phosphate + H(+) = UMP + CO2. It functions in the pathway pyrimidine metabolism; UMP biosynthesis via de novo pathway; UMP from orotate: step 2/2. The polypeptide is Orotidine 5'-phosphate decarboxylase (URA3) (Pichia kudriavzevii (Yeast)).